A 291-amino-acid polypeptide reads, in one-letter code: Nucleotide-binding protein Lm4b_02443 (291 aa).

13-20 (GMSGAGKT) serves as a coordination point for ATP. Residue 63–66 (DLRG) coordinates GTP.

This sequence belongs to the RapZ-like family.

In terms of biological role, displays ATPase and GTPase activities. The protein is Nucleotide-binding protein Lm4b_02443 of Listeria monocytogenes serotype 4b (strain CLIP80459).